The following is a 179-amino-acid chain: ATP synthase subunit b, chloroplastic (179 aa).

The helical transmembrane segment at isoleucine 28–leucine 46 threads the bilayer.

It belongs to the ATPase B chain family. F-type ATPases have 2 components, F(1) - the catalytic core - and F(0) - the membrane proton channel. F(1) has five subunits: alpha(3), beta(3), gamma(1), delta(1), epsilon(1). F(0) has four main subunits: a(1), b(1), b'(1) and c(10-14). The alpha and beta chains form an alternating ring which encloses part of the gamma chain. F(1) is attached to F(0) by a central stalk formed by the gamma and epsilon chains, while a peripheral stalk is formed by the delta, b and b' chains.

The protein resides in the plastid. It localises to the chloroplast thylakoid membrane. Its function is as follows. F(1)F(0) ATP synthase produces ATP from ADP in the presence of a proton or sodium gradient. F-type ATPases consist of two structural domains, F(1) containing the extramembraneous catalytic core and F(0) containing the membrane proton channel, linked together by a central stalk and a peripheral stalk. During catalysis, ATP synthesis in the catalytic domain of F(1) is coupled via a rotary mechanism of the central stalk subunits to proton translocation. Component of the F(0) channel, it forms part of the peripheral stalk, linking F(1) to F(0). The polypeptide is ATP synthase subunit b, chloroplastic (Trieres chinensis (Marine centric diatom)).